Here is a 259-residue protein sequence, read N- to C-terminus: Cell division protein FtsQ (259 aa).

Topologically, residues 1–15 are cytoplasmic; that stretch reads MTRDQTATFGRHALR. Residues 16 to 36 form a helical membrane-spanning segment; sequence VAGSGLLVAGVVALGLLGWQW. Topologically, residues 37–259 are periplasmic; that stretch reads RANVTVDRVA…VVTRTRPLDG (223 aa). A POTRA domain is found at 40 to 109; that stretch reads VTVDRVAVTG…GALTISVTER (70 aa).

This sequence belongs to the FtsQ/DivIB family. FtsQ subfamily.

It localises to the cell inner membrane. Essential cell division protein. This chain is Cell division protein FtsQ, found in Salinibacter ruber (strain DSM 13855 / M31).